A 312-amino-acid polypeptide reads, in one-letter code: Structure-specific endonuclease subunit SLX1 (312 aa).

One can recognise a GIY-YIG domain in the interval Asp-9–Lys-92. An SLX1-type zinc finger spans residues Cys-219–Cys-282.

It belongs to the SLX1 family. In terms of assembly, forms a heterodimer with SLX4. A divalent metal cation serves as cofactor.

It is found in the nucleus. Its function is as follows. Catalytic subunit of the SLX1-SLX4 structure-specific endonuclease that resolves DNA secondary structures generated during DNA repair and recombination. Has endonuclease activity towards branched DNA substrates, introducing single-strand cuts in duplex DNA close to junctions with ss-DNA. This chain is Structure-specific endonuclease subunit SLX1, found in Candida glabrata (strain ATCC 2001 / BCRC 20586 / JCM 3761 / NBRC 0622 / NRRL Y-65 / CBS 138) (Yeast).